A 322-amino-acid polypeptide reads, in one-letter code: Alanine dehydrogenase (322 aa).

Lysine 65 acts as the Proton donor/acceptor in catalysis. NAD(+) is bound by residues arginine 108, 135–136 (TQ), 157–159 (DVR), 217–219 (GAD), lysine 223, and serine 290.

The protein belongs to the ornithine cyclodeaminase/mu-crystallin family. Archaeal alanine dehydrogenase subfamily. In terms of assembly, homodimer.

It catalyses the reaction L-alanine + NAD(+) + H2O = pyruvate + NH4(+) + NADH + H(+). Functionally, catalyzes the NAD(+)-dependent oxidative deamination of L-alanine to pyruvate, and the reverse reaction, the reductive amination of pyruvate. Its physiological role is not known. Cannot use NADP(+) instead of NAD(+) as a cosubstrate. In the deamination direction, can also efficiently use L-2-aminobutyrate as substrate. In the reductive amination direction, also exhibits high activity with 2-oxobutyrate and oxaloacetate as substrate. In contrast to bacterial homologs, does not exhibit any ornithine cyclodeaminase activity. This is Alanine dehydrogenase from Archaeoglobus fulgidus (strain ATCC 49558 / DSM 4304 / JCM 9628 / NBRC 100126 / VC-16).